Consider the following 406-residue polypeptide: Eukaryotic initiation factor 4A-I (406 aa).

The tract at residues methionine 1–glycine 21 is disordered. Serine 2 carries the N-acetylserine modification. A Phosphoserine modification is found at serine 4. The Q motif motif lies at aspartate 32 to glutamine 60. Residues isoleucine 63–isoleucine 234 form the Helicase ATP-binding domain. Residue alanine 76–threonine 83 coordinates ATP. Position 118 is an N6-acetyllysine (lysine 118). Lysine 146 participates in a covalent cross-link: Glycyl lysine isopeptide (Lys-Gly) (interchain with G-Cter in SUMO2). Threonine 158 carries the phosphothreonine modification. Position 174 is an N6-acetyllysine (lysine 174). Positions aspartate 182–aspartate 185 match the DEAD box motif. An N6-acetyllysine modification is found at lysine 193. A Glycyl lysine isopeptide (Lys-Gly) (interchain with G-Cter in SUMO2) cross-link involves residue lysine 225. Lysine 238 carries the post-translational modification N6-acetyllysine; alternate. Lysine 238 is covalently cross-linked (Glycyl lysine isopeptide (Lys-Gly) (interchain with G-Cter in SUMO2); alternate). The Helicase C-terminal domain occupies glycine 245 to isoleucine 406. Residues lysine 309, lysine 369, and lysine 381 each participate in a glycyl lysine isopeptide (Lys-Gly) (interchain with G-Cter in SUMO2) cross-link.

It belongs to the DEAD box helicase family. eIF4A subfamily. In terms of assembly, eIF4F is a multi-subunit complex, the composition of which varies with external and internal environmental conditions. It is composed of at least EIF4A, EIF4E and EIF4G1/EIF4G3. Interacts with PAIP1, EIF4E and UPF2. Found in a complex with XPO7, EIF4A1, ARHGAP1, VPS26A, VPS29, VPS35 and SFN. May interact with NOM1. Interacts with PDCD4; this interferes with the interaction between EIF4A and EIF4G. Interacts with RBM4. Interacts with DDX3X in an RNA-independent manner. Interacts with PKP1 (via N-terminus); the interaction promotes EIF4A1 recruitment to the cap-dependent translation complex and EIF4A1 ATPase activity.

The protein resides in the cytoplasm. It is found in the perinuclear region. Its subcellular location is the cell membrane. It localises to the stress granule. The enzyme catalyses ATP + H2O = ADP + phosphate + H(+). In terms of biological role, ATP-dependent RNA helicase which is a subunit of the eIF4F complex involved in cap recognition and is required for mRNA binding to ribosome. In the current model of translation initiation, eIF4A unwinds RNA secondary structures in the 5'-UTR of mRNAs which is necessary to allow efficient binding of the small ribosomal subunit, and subsequent scanning for the initiator codon. As a result, promotes cell proliferation and growth. This is Eukaryotic initiation factor 4A-I (EIF4A1) from Pongo abelii (Sumatran orangutan).